The chain runs to 111 residues: Iron-sulfur cluster assembly protein CyaY (111 aa).

The protein belongs to the frataxin family.

In terms of biological role, involved in iron-sulfur (Fe-S) cluster assembly. May act as a regulator of Fe-S biogenesis. The protein is Iron-sulfur cluster assembly protein CyaY of Cupriavidus necator (strain ATCC 17699 / DSM 428 / KCTC 22496 / NCIMB 10442 / H16 / Stanier 337) (Ralstonia eutropha).